A 407-amino-acid polypeptide reads, in one-letter code: Aurofusarin biosynthesis cluster protein S (407 aa).

Positions 1–35 are cleaved as a signal peptide; it reads MSKQKPSLWRALRALSFIISIPLLIQYLVLKWYST. N-linked (GlcNAc...) asparagine glycans are attached at residues N52, N174, N196, N274, and N312. 2 FAS1 domains span residues 52–192 and 195–365; these read NLTV…DTVL and PNST…DSIL.

Might be part of an extracellular enzyme complex composed of GIP1, aurF, aurO and aurS.

The protein resides in the secreted. It is found in the extracellular space. It participates in pigment biosynthesis. Functionally, part of the gene cluster that mediates the biosynthesis of aurofusarin, a red mycelium pigment which is acting as a mycotoxin. The first step is performed by the polyketide synthase which condenses one acetyl-CoA and 6 malonyl-CoA units to form the first intermediate, the cyclic heptaketide and yellow pigment YWA1. The C2 hydroxyl group in the pyrone ring of YWA1 is probably formed during ring closure by an aldol-type cyclization reaction. The dehydratase aurZ then acts as the first tailoring enzyme in the aurofusarin biosynthetic pathway by converting YWA1 to nor-rubrofusarin. Nor-rubrofusarin is then methylated to rubrofusarin by the O-methyltransferase aurJ. Rubrofusarin is then transported across the plasma membrane by the rubrofusarin-specific pump aurT for further enzymatic processing by the extracellular complex composed of GIP1, aurF, aurO and aurS to yield aurofusarin. The polypeptide is Aurofusarin biosynthesis cluster protein S (Gibberella zeae (strain ATCC MYA-4620 / CBS 123657 / FGSC 9075 / NRRL 31084 / PH-1) (Wheat head blight fungus)).